A 309-amino-acid polypeptide reads, in one-letter code: uncharacterized protein (309 aa).

The protein belongs to the OprB family.

This is an uncharacterized protein from Aquifex aeolicus (strain VF5).